We begin with the raw amino-acid sequence, 360 residues long: Peptide chain release factor 1 (360 aa).

An N5-methylglutamine modification is found at Q235. The interval 285 to 313 is disordered; the sequence is KRQQAEASTRRNLLGSGDRSDRNRTYNFP.

It belongs to the prokaryotic/mitochondrial release factor family. Methylated by PrmC. Methylation increases the termination efficiency of RF1.

It localises to the cytoplasm. Functionally, peptide chain release factor 1 directs the termination of translation in response to the peptide chain termination codons UAG and UAA. This is Peptide chain release factor 1 from Klebsiella pneumoniae (strain 342).